Here is a 104-residue protein sequence, read N- to C-terminus: MQKIRRDDEIIVIAGKDKGKRGKVLKVLADDRLVVGGINLVKRHTKPNPMSGVQGGIVEKEAPLHASNVAIFNGATNKADRVGFKVEDGKKIRVFKSTQKAVDA.

This sequence belongs to the universal ribosomal protein uL24 family. In terms of assembly, part of the 50S ribosomal subunit.

One of two assembly initiator proteins, it binds directly to the 5'-end of the 23S rRNA, where it nucleates assembly of the 50S subunit. Functionally, one of the proteins that surrounds the polypeptide exit tunnel on the outside of the subunit. The chain is Large ribosomal subunit protein uL24 from Pseudomonas savastanoi pv. phaseolicola (strain 1448A / Race 6) (Pseudomonas syringae pv. phaseolicola (strain 1448A / Race 6)).